A 1373-amino-acid chain; its full sequence is MAERANLVFHNKSIDGTAMKRLISRLIDHFGMAYTAHILDQVKTLGFQQATATSISLGIDDLLTIPSKGWLVQDAEQQSLILEKHHHYGNVHAVEKLRQSIEIWYSTSEYLRQEMNPNFRMTDPYNPVHIMSFSGARGNVSQVHQLVGMRGLMSDPQGQMIDLPIQSNLREGLSLTEYIISCYGARKGVVDTAVRTSDAGYLTRRLVEVVQHIVVRRTDCGTIRGISVSPRNGRMPERIFTQILIGRVLADDIYLGSRCIATRNQDIGVGLVNRFITFRTQPIAIRTPFTCRSTSWICRLCYGRSPTHGDLVELGEAVGIIAGQSIGEPGTQLTLRTFHTGGVFTGGTAEHVRAPYNGKIKFNEGLVHPTRTRHGHPAFLCYIDLYVTIESEDSLHNVNIPPKSFLLVQNDQYVESEQVIAEIRAGASTLNFKEKVRKHIYSDSEGEMHWSTDVYHAPEFTYGNVHLLPKASRLWILSGRPYRSSVVSFSLHKDQDQTTGNSLSFEQKIYNLSMTNDQVQNKFLDPYIKKSSKKEDRSPNYSELNGMSHCNHIYPAKNSDLLAKRRKNRLIIPFQFQLSQEREKELMSLSNGISIEIPINGIFRRNSIFAYFNDPRYRTKSSGITKYETIETHSSVKKEDLIEYRGVKEFRPKYQMKVDRFFFISQEVHILPGSSSIMVRNNSIIGVDTQITLNTRSRVGGVVRVERKKKKIELKIFSGDIYFPGETDKISRHSGILIPPGKTNYKESKNIKNWLYVQRITPTKKKYFVLVRPVVTYEITDGINLATLLPQDLLQERGNVQLRVFNYILYGNGKVTRGIYDTSIQLVRTCLVLNWNQDKKDSSIEEARASFVEVRTNGIIRYFLKIGLMNRALSYIGKRNNPPLFSDDGLEYTNMNPFFSIYSKPKLQQAFNPNQGTVRMLVGKNKECQSFIILSSSNCFRMGPFTLNGVKYPKESIKKDRLILIKNSFGPLGTVLNFVNFFFFYHLITHNQILVNNYLQLDNLKQTCQVLKYQYYLMDENGIIYNPDFCSNIILNPFNLHWDFLHYNFCDETSTKMRLGQFICENICIKKNGLHLKPGQIIIVQFDSVVIRSAKPCLATPGATVHGHYGEIIYEGDTLVTFIYEKSRSGDITQGLPKVEQVLEVRSVESISMNLEKRINGWNERIKKILGIPWGFLVGAELTIAQSRISLVNKIQKVYRSQGVQIHDRHIEIIVRQITSKVLVSEDGMSNIFLPGELIGLFRAERTGRALEEAICYRTILLGITRASLNTQSFISEASFQETARVLAKAALRGRIDWLKGLKENVVLGGMIPVGTGFKGFVHRSNQHKSISIPLKIKNKNRLEGEMRDILFYHRELLDSCFLKNLGDRSKQQ.

Zn(2+) contacts are provided by Cys220, Cys291, Cys298, and Cys301.

The protein belongs to the RNA polymerase beta' chain family. RpoC2 subfamily. As to quaternary structure, in plastids the minimal PEP RNA polymerase catalytic core is composed of four subunits: alpha, beta, beta', and beta''. When a (nuclear-encoded) sigma factor is associated with the core the holoenzyme is formed, which can initiate transcription. The cofactor is Zn(2+).

It localises to the plastid. The protein resides in the chloroplast. It carries out the reaction RNA(n) + a ribonucleoside 5'-triphosphate = RNA(n+1) + diphosphate. Functionally, DNA-dependent RNA polymerase catalyzes the transcription of DNA into RNA using the four ribonucleoside triphosphates as substrates. The polypeptide is DNA-directed RNA polymerase subunit beta'' (Silene latifolia (White campion)).